The sequence spans 392 residues: Formate-dependent phosphoribosylglycinamide formyltransferase (392 aa).

Residues 20–21 and E80 each bind N(1)-(5-phospho-beta-D-ribosyl)glycinamide; that span reads EL. Residues R112, K153, 158–163, 193–196, and E201 contribute to the ATP site; these read SSGKGQ and EGFV. One can recognise an ATP-grasp domain in the interval 117–306; the sequence is RLAAEELGLP…EFALHVRAIL (190 aa). Mg(2+) is bound by residues E265 and E277. Residues D284, K355, and 362–363 contribute to the N(1)-(5-phospho-beta-D-ribosyl)glycinamide site; that span reads RR.

The protein belongs to the PurK/PurT family. Homodimer.

It catalyses the reaction N(1)-(5-phospho-beta-D-ribosyl)glycinamide + formate + ATP = N(2)-formyl-N(1)-(5-phospho-beta-D-ribosyl)glycinamide + ADP + phosphate + H(+). It functions in the pathway purine metabolism; IMP biosynthesis via de novo pathway; N(2)-formyl-N(1)-(5-phospho-D-ribosyl)glycinamide from N(1)-(5-phospho-D-ribosyl)glycinamide (formate route): step 1/1. In terms of biological role, involved in the de novo purine biosynthesis. Catalyzes the transfer of formate to 5-phospho-ribosyl-glycinamide (GAR), producing 5-phospho-ribosyl-N-formylglycinamide (FGAR). Formate is provided by PurU via hydrolysis of 10-formyl-tetrahydrofolate. The sequence is that of Formate-dependent phosphoribosylglycinamide formyltransferase from Aeromonas salmonicida (strain A449).